The chain runs to 291 residues: Elongation factor Ts (291 aa).

The tract at residues 79–82 (TDFV) is involved in Mg(2+) ion dislocation from EF-Tu.

This sequence belongs to the EF-Ts family.

It localises to the cytoplasm. Functionally, associates with the EF-Tu.GDP complex and induces the exchange of GDP to GTP. It remains bound to the aminoacyl-tRNA.EF-Tu.GTP complex up to the GTP hydrolysis stage on the ribosome. In Ruegeria sp. (strain TM1040) (Silicibacter sp.), this protein is Elongation factor Ts.